The sequence spans 509 residues: Heat shock 70 kDa protein 14 (509 aa).

The protein belongs to the heat shock protein 70 family. In terms of assembly, component of ribosome-associated complex (RAC), a heterodimer composed of Hsp70/DnaK-type chaperone HSPA14 and Hsp40/DnaJ-type chaperone DNAJC2.

The protein resides in the cytoplasm. Its subcellular location is the cytosol. Component of the ribosome-associated complex (RAC), a complex involved in folding or maintaining nascent polypeptides in a folding-competent state. In the RAC complex, binds to the nascent polypeptide chain, while DNAJC2 stimulates its ATPase activity. This Mus musculus (Mouse) protein is Heat shock 70 kDa protein 14 (Hspa14).